A 168-amino-acid chain; its full sequence is Dihydrofolate reductase (168 aa).

The DHFR domain maps to 1 to 159 (MISFIFAMDA…YDYEFLMYEK (159 aa)). 5–7 (IFA) is a binding site for substrate. Residues 6 to 7 (FA) and 14 to 19 (IGKDND) contribute to the NADP(+) site. Substrate is bound at residue Asp-27. 43 to 46 (GRKT) serves as a coordination point for NADP(+). Arg-57 contacts substrate. NADP(+) is bound by residues 62–65 (VTSA) and 95–100 (IGGAQL). Thr-114 lines the substrate pocket.

This sequence belongs to the dihydrofolate reductase family.

It catalyses the reaction (6S)-5,6,7,8-tetrahydrofolate + NADP(+) = 7,8-dihydrofolate + NADPH + H(+). The protein operates within cofactor biosynthesis; tetrahydrofolate biosynthesis; 5,6,7,8-tetrahydrofolate from 7,8-dihydrofolate: step 1/1. Key enzyme in folate metabolism. Catalyzes an essential reaction for de novo glycine and purine synthesis, and for DNA precursor synthesis. The protein is Dihydrofolate reductase (dfrA) of Bacillus subtilis (strain 168).